The sequence spans 1843 residues: Proteasome activator complex subunit 4 (1843 aa).

Over residues 1 to 11 the composition is skewed to low complexity; the sequence is MEPAERAGVGE. A disordered region spans residues 1–25; it reads MEPAERAGVGEPPEPGGRPEPGPRG. Over residues 12 to 22 the composition is skewed to pro residues; that stretch reads PPEPGGRPEPG. HEAT repeat units follow at residues 475–519 and 998–1037; these read PEGP…LVDC and NFCCRDIIPLVLEFLRPDRQGVTQQQFKGALYCLLGNHSG. Position 1121 is a phosphoserine (Ser1121). HEAT repeat units lie at residues 1179 to 1217 and 1354 to 1392; these read RVLPLRAIRFFVENLNHDAIVVRKMAISAVAGILKQLKR and DAFLPVLKPHLEHLVADSHESTQRCVAEIIAGLIRGSKH. Ser1614 carries the phosphoserine modification. HEAT repeat units lie at residues 1636–1674 and 1680–1718; these read PHQVPLVLQVLKQTARSSSWHARYTVLTYLQTMVFYNLF and EDAVKDIRWLVISLLEDEQLEVREMAATTLSGLLQCNFL. A bromodomain-like (BRDL) region spans residues 1650–1738; the sequence is ARSSSWHARY…EQLCKTKLPK (89 aa). Ser1746 is subject to Phosphoserine.

The protein belongs to the BLM10 family. In terms of assembly, homodimer. Interacts with the 20S and 26S proteasomes. Component of the spermatoproteasome, a form of the proteasome specifically found in testis.

Its subcellular location is the cytoplasm. It localises to the cytosol. The protein localises to the nucleus. It is found in the nucleus speckle. Associated component of the proteasome that specifically recognizes acetylated histones and promotes ATP- and ubiquitin-independent degradation of core histones during spermatogenesis and DNA damage response. Recognizes and binds acetylated histones via its bromodomain-like (BRDL) region and activates the proteasome by opening the gated channel for substrate entry. Binds to the core proteasome via its C-terminus, which occupies the same binding sites as the proteasomal ATPases, opening the closed structure of the proteasome via an active gating mechanism. Component of the spermatoproteasome, a form of the proteasome specifically found in testis: binds to acetylated histones and promotes degradation of histones, thereby participating actively to the exchange of histones during spermatogenesis. Also involved in DNA damage response in somatic cells, by promoting degradation of histones following DNA double-strand breaks. The protein is Proteasome activator complex subunit 4 of Homo sapiens (Human).